A 559-amino-acid polypeptide reads, in one-letter code: Malate synthase, glyoxysomal (559 aa).

The active-site Proton acceptor is the arginine 173. Aspartate 459 serves as the catalytic Proton donor. The Microbody targeting signal signature appears at 557 to 559 (CKL).

The protein belongs to the malate synthase family.

The protein resides in the glyoxysome. The catalysed reaction is glyoxylate + acetyl-CoA + H2O = (S)-malate + CoA + H(+). Its pathway is carbohydrate metabolism; glyoxylate cycle; (S)-malate from isocitrate: step 2/2. The protein is Malate synthase, glyoxysomal (LIP) of Zea mays (Maize).